Here is a 299-residue protein sequence, read N- to C-terminus: MLWLFYSSAIIASVILDFVGIIMSLFITVVNYKTWVKSHRISSSERILFSLGITRFFMLALFLVNTIYFVSSNKERSVYLSAFFVLCFMFLDSSSLWFVTLLNSLYCVKITNFQHSVFLLLKRNISPKIPRLLPACVLISAFTTCLYITLSQASPFPELVTKRNNTSFNISEGILSLVVSFVLSSSLQFIINVTSASLLIYSLRRHIRKMQKNATGFWNPQTEAHVGAMKLMIYFLILYIPYSVATLVQYLPFYAGMDMGTKSICLIFATLYSPGHSVLIIITHPKLKTTAKKILCFKK.

The Extracellular portion of the chain corresponds to 1–9; that stretch reads MLWLFYSSA. A helical transmembrane segment spans residues 10 to 30; sequence IIASVILDFVGIIMSLFITVV. Residues 31-46 are Cytoplasmic-facing; that stretch reads NYKTWVKSHRISSSER. A helical membrane pass occupies residues 47-67; sequence ILFSLGITRFFMLALFLVNTI. The Extracellular portion of the chain corresponds to 68–81; the sequence is YFVSSNKERSVYLS. Residues 82–102 form a helical membrane-spanning segment; sequence AFFVLCFMFLDSSSLWFVTLL. The Cytoplasmic segment spans residues 103 to 131; that stretch reads NSLYCVKITNFQHSVFLLLKRNISPKIPR. Residues 132–152 traverse the membrane as a helical segment; it reads LLPACVLISAFTTCLYITLSQ. The Extracellular portion of the chain corresponds to 153 to 172; it reads ASPFPELVTKRNNTSFNISE. N-linked (GlcNAc...) asparagine glycans are attached at residues Asn164, Asn165, and Asn169. A helical transmembrane segment spans residues 173–193; it reads GILSLVVSFVLSSSLQFIINV. Residues 194–230 lie on the Cytoplasmic side of the membrane; that stretch reads TSASLLIYSLRRHIRKMQKNATGFWNPQTEAHVGAMK. Residues 231–251 traverse the membrane as a helical segment; that stretch reads LMIYFLILYIPYSVATLVQYL. Topologically, residues 252–262 are extracellular; it reads PFYAGMDMGTK. The helical transmembrane segment at 263-283 threads the bilayer; sequence SICLIFATLYSPGHSVLIIIT. Residues 284–299 lie on the Cytoplasmic side of the membrane; sequence HPKLKTTAKKILCFKK.

This sequence belongs to the G-protein coupled receptor T2R family.

The protein resides in the membrane. Its subcellular location is the cell projection. The protein localises to the cilium membrane. Gustducin-coupled receptor implicated in the perception of bitter compounds in the oral cavity and the gastrointestinal tract. Signals through PLCB2 and the calcium-regulated cation channel TRPM5. In airway epithelial cells, binding of denatonium increases the intracellular calcium ion concentration and stimulates ciliary beat frequency. The polypeptide is Taste receptor type 2 member 4 (TAS2R4) (Papio hamadryas (Hamadryas baboon)).